The primary structure comprises 92 residues: PqqA binding protein (92 aa).

It belongs to the PqqD family. In terms of assembly, monomer. Interacts with PqqE.

It participates in cofactor biosynthesis; pyrroloquinoline quinone biosynthesis. Functionally, functions as a PqqA binding protein and presents PqqA to PqqE, in the pyrroloquinoline quinone (PQQ) biosynthetic pathway. The polypeptide is PqqA binding protein (Xanthomonas oryzae pv. oryzae (strain MAFF 311018)).